Here is a 983-residue protein sequence, read N- to C-terminus: MRIFSFLFLLLLGILTGQGLVSGTDNGKTTDVTWDKYSLSVKGQRLFVFSGEFHYQRLPVPELWLDVFQKLRANGFNAISVYFFWSFHSASEGEFDFENGAHDIQRLFDYAKEAGLYVIARAGPYCNAETSAGGFALWAANGQMGNERTSDEAYYEKWRPWILEVGKIIAKNQITNGGPVILNQHENELVETTYDPNHTLVVYMKQIAQVFEEAGIVVPSSHNEKGMRGVSWSTDYHNVGGAVNIYGLDSYPGGLSCTNPNSGFNLVRTYHQWFQNYSFTQPSYLPEFEGGWFQPWGGSFYDTCATELSPEFPDVYYKNNIGSRVTLHSIYMTYGGTNWGHSAAPVVYTSYDYAAPLRETREIRDKLKQTKLIGLFTRVSKDLLKTYMEGNGTGYTSDSSIYTWSLRNPDTNAGFYVLAHSTSSTRDVTTFTLNVTTSAGAISIPDIELNGRQSKIIVTDYNFGTNSTLLFSSAEVLTYANLDVNVLVFYLNVGQKGTFVFKDEPKLAFQTYGNSNLTTSESSYGTQYSYTQGKGVTAVKFSNGVLAYFLDKESAWNFFAPPTTSSPQVAPNEHILVQGPYLVRGASVNHGTVEITGDNANTTSIEVYTGNSQVKKIKWNGKTIETRKTAYGSLIGTAPGAEDVKIQLPSLDSWKAQDTLPEIQPDYDDSKWTVCNKTTSVNAIAPLSLPVLYSGDYGYHAGTKVYRGRFDGRNVTGANVTVQNGAAAGWAAWVNGQYAGGSAGSPNLAATSAVLTFNSSSLKDQDNVLTVVTDYTGHDQNSVRPKGTQNPRGILGATLIGGGNFTSWRIQGNAGGEKNIDPVRGPMNEGGLYGERMGWHLPGYKVPKSASKSSPLDGVSGAEGRFYTTTFKLKLDKDLDVPIGLQLGAPEGTKAVVQVFMNGYQFGHYLPHTGPQSLFPFPPGVINNRGENTLAISMWALTDAGAKLDKVELVAYGKYRSGFDFNQDWGYLQPGWKDRSQYA.

Positions 1-23 (MRIFSFLFLLLLGILTGQGLVSG) are cleaved as a signal peptide. Substrate is bound by residues Tyr82, Asn127, Ala128, Glu129, and Asn187. Glu188 (proton donor) is an active-site residue. N-linked (GlcNAc...) asparagine glycosylation occurs at Asn197. Tyr251 provides a ligand contact to substrate. A disulfide bridge connects residues Cys257 and Cys304. N-linked (GlcNAc...) asparagine glycosylation is present at Asn276. The Nucleophile role is filled by Glu287. Tyr353 provides a ligand contact to substrate. 10 N-linked (GlcNAc...) asparagine glycosylation sites follow: Asn391, Asn434, Asn466, Asn516, Asn601, Asn676, Asn714, Asn719, Asn758, and Asn804.

It belongs to the glycosyl hydrolase 35 family.

It localises to the secreted. The catalysed reaction is Hydrolysis of terminal non-reducing beta-D-galactose residues in beta-D-galactosides.. Cleaves beta-linked terminal galactosyl residues from gangliosides, glycoproteins, and glycosaminoglycans. This chain is Probable beta-galactosidase C (lacC), found in Aspergillus fumigatus (strain CBS 144.89 / FGSC A1163 / CEA10) (Neosartorya fumigata).